The primary structure comprises 179 residues: Large ribosomal subunit protein uL5 (179 aa).

The protein belongs to the universal ribosomal protein uL5 family. In terms of assembly, part of the 50S ribosomal subunit; part of the 5S rRNA/L5/L18/L25 subcomplex. Contacts the 5S rRNA and the P site tRNA. Forms a bridge to the 30S subunit in the 70S ribosome.

This is one of the proteins that bind and probably mediate the attachment of the 5S RNA into the large ribosomal subunit, where it forms part of the central protuberance. In the 70S ribosome it contacts protein S13 of the 30S subunit (bridge B1b), connecting the 2 subunits; this bridge is implicated in subunit movement. Contacts the P site tRNA; the 5S rRNA and some of its associated proteins might help stabilize positioning of ribosome-bound tRNAs. The polypeptide is Large ribosomal subunit protein uL5 (Dictyoglomus thermophilum (strain ATCC 35947 / DSM 3960 / H-6-12)).